Reading from the N-terminus, the 440-residue chain is Xylose isomerase (440 aa).

Active-site residues include His100 and Asp103. Residues Glu231, Glu267, His270, Asp295, Asp306, Asp308, and Asp338 each coordinate Mg(2+).

The protein belongs to the xylose isomerase family. In terms of assembly, homotetramer. Mg(2+) serves as cofactor.

Its subcellular location is the cytoplasm. The catalysed reaction is alpha-D-xylose = alpha-D-xylulofuranose. In Paraburkholderia xenovorans (strain LB400), this protein is Xylose isomerase.